Reading from the N-terminus, the 74-residue chain is Lambda-hexatoxin-Hv1d (74 aa).

Positions 1–22 (MNTATCFIVLLVVATVIGGIEA) are cleaved as a signal peptide. Positions 23–35 (GESDMRKDVMGLF) are excised as a propeptide. Cystine bridges form between Cys-40–Cys-54, Cys-47–Cys-59, Cys-50–Cys-51, and Cys-53–Cys-69.

It belongs to the neurotoxin 11 (kappa toxin) family. Expressed by the venom gland.

It is found in the secreted. Its function is as follows. This excitatory toxin inhibits insect calcium-activated potassium (KCa) channels (Slo-type). This chain is Lambda-hexatoxin-Hv1d, found in Hadronyche versuta (Blue mountains funnel-web spider).